We begin with the raw amino-acid sequence, 623 residues long: Protein skinhead-1 (623 aa).

Disordered regions lie at residues 1 to 29, 158 to 184, 421 to 451, and 467 to 557; these read MGGS…FSSV, TEHP…YEYS, YQST…GSVT, and QRHS…LASD. Ser164 carries the phosphoserine; by pmk-1 modification. A compositionally biased stretch (polar residues) spans 173–184; it reads ERPTTSSRYEYS. Ser430 is subject to Phosphoserine; by pmk-1. 3 stretches are compositionally biased toward low complexity: residues 435–449, 472–498, and 511–529; these read GSSG…SPGS, SDCT…ESST, and PSSG…SQSS. Positions 540–623 are basic motif; that stretch reads SGQRKRGRQS…DRHDKMSHYI (84 aa).

This sequence belongs to the bZIP family. Skn1 subfamily. Monomer. Interacts with GATA factor elt-3; interaction may enhance transcriptional activation of target genes. In terms of assembly, interacts with pgma-5. Interacts with transcription factor mxl-3 (via N-terminus). In terms of processing, cleaved by the aspartic protease ddi-1. As to expression, postembryonic intestinal cells.

It is found in the nucleus. The protein resides in the cytoplasm. The protein localises to the mitochondrion. In terms of biological role, transcription factor. Required to specify the fate of ventral blastomeres in the early embryo, and postembryonically for the development of the intestine. Directly regulates expression of zygotically expressed med-1 and med-2 to direct mesendoderm development. In response to oxidative stress and anoxia, required to up-regulate expression of stl-1 mRNA. Involved in regulating innate immunity, acting downstream of the pmk-1 p38/MAPK pathway and probably also downstream of nipi-3. Required for the up-regulation of phase II detoxification genes, including gcs-1 and several glutathione-S-transferase mRNAs in response to oxidative stress generated during pathogenic bacterial infection. Modulates oxidative stress responses in concert with transcription factors such as hcf-1 and elt-3. Regulates the transcription of genes associated with metabolism in response to changes in nutrient availability. In neurons, involved in mitochondrial fusion and behavioral recovery during reoxygenation. Required for riok-1 mRNA expression in the intestine. Downstream of the let-60/Ras, mek-2 and pmk-1 pathway, positively regulates lifespan probably by preventing transcription of insulin-like peptides such as ins-39. Prevents degeneration of dopaminergic CEP neurons in response to high Al(3+) or Mn(2+) levels, probably by promoting the expression of glutathione-S-transferase gst-1. Its function is as follows. Directed by the ER-associated degradation pathway (ERAD), mediates proteasomal homeostasis by regulating the expression of proteasomal subunits such as rpt-3 to confer resistance to proteasomal dysfunction. This is Protein skinhead-1 (skn-1) from Caenorhabditis elegans.